The chain runs to 123 residues: Putative iron-sulfur cluster insertion protein ErpA (123 aa).

Iron-sulfur cluster is bound by residues Cys-51, Cys-115, and Cys-117.

It belongs to the HesB/IscA family. In terms of assembly, homodimer. The cofactor is iron-sulfur cluster.

In terms of biological role, required for insertion of 4Fe-4S clusters. This Bordetella bronchiseptica (strain ATCC BAA-588 / NCTC 13252 / RB50) (Alcaligenes bronchisepticus) protein is Putative iron-sulfur cluster insertion protein ErpA.